Consider the following 1346-residue polypeptide: Toll-like receptor Tollo (1346 aa).

Positions 1-21 are cleaved as a signal peptide; sequence MLATTHMLYVLIATCVIPIFG. Over 22-1021 the chain is Extracellular; it reads AALSKTVLYQ…NQPPKLDYIP (1000 aa). N-linked (GlcNAc...) asparagine glycosylation is found at asparagine 63, asparagine 112, and asparagine 126. LRR repeat units follow at residues 97-120, 124-146, 151-174, 176-198, 209-232, 234-256, 257-280, 282-304, 306-330, 331-354, 355-378, 380-402, 404-426, 427-450, 452-473, 474-497, 498-521, 523-544, 546-568, 570-591, 593-614, 615-637, and 638-661; these read LVELRDLTIEYCKLGNLTDGSFRG, LRNLTIRTHNGDWSTMSLEMASN, FRQLERLDLSLNNIWLIPDGMVCP, KSLQHLNASYNKIQDISNFYFSA, GSTLQSLDLSANKMVSLPTAMLSA, GRLTHLNMAKNSMSFLADRAFEG, LLSLRVVDLSANRLTSLPPELFAE, KQLQEIYLRNNSINVLAPGIFGE, AELLVLDLASNELNSQWINAATFVG, LKRLMMLDLSANKISRLEAHIFRP, LASLQILKLEDNYIDQLPGGIFAD, TNLHTLILSRNRISVIEQRTLQG, KNLLVLSLDFNRISRMDQRSLVN, CSQLQDLHLNDNKLQAVPEALAHV, LLKTLDVGENMISQIENTSITQ, LESLYGLRMTENSLTHIRRGVFDR, MSSLQILNLSQNKLKSIEAGSLQR, SQLQAIRLDGNQLKSIAGLFTE, PNLVWLNISGNRLEKFDYSHIPI, LQWLDVRANRITQLGNYFEIES, LSLSTFDASYNLLTEITASSIP, NSVEVLYLNDNQISKIQPYTFFK, and KPNLTRVDLVRNRLTTLEPNALRL. Asparagine 182 carries N-linked (GlcNAc...) asparagine glycosylation. Asparagine 291 carries an N-linked (GlcNAc...) asparagine glycan. Asparagine 426 carries an N-linked (GlcNAc...) asparagine glycan. N-linked (GlcNAc...) asparagine glycosylation is present at asparagine 468. Residue asparagine 505 is glycosylated (N-linked (GlcNAc...) asparagine). A glycan (N-linked (GlcNAc...) asparagine) is linked at asparagine 552. Residue asparagine 640 is glycosylated (N-linked (GlcNAc...) asparagine). 4 disulfides stabilise this stretch: cysteine 682–cysteine 710, cysteine 684–cysteine 733, cysteine 757–cysteine 763, and cysteine 761–cysteine 776. LRR repeat units follow at residues 790 to 813, 814 to 837, 838 to 861, 863 to 885, 887 to 909, and 912 to 938; these read PMDSTQLYLDGNNFRELQSHAFIG, RKRLKVLHLNHSRIEVLHNRTFYG, LLELEVLQLQSNQLKALNGNEFQG, DNLQELYLQHNAIATIDTLTFTH, YHLKILRLDHNAITSFAVWNFLP, and LNELRLASNPWTCSCEFIDKLRDYINR. Residues asparagine 823 and asparagine 832 are each glycosylated (N-linked (GlcNAc...) asparagine). A disulfide bond links cysteine 924 and cysteine 950. Asparagine 956 and asparagine 1000 each carry an N-linked (GlcNAc...) asparagine glycan. Residues 1022–1042 form a helical membrane-spanning segment; that stretch reads ILVAILTAFIFVMICISLVFI. Residues 1043–1346 lie on the Cytoplasmic side of the membrane; sequence FRQEMRVWCH…PTPASRNLHM (304 aa). The 136-residue stretch at 1074-1209 folds into the TIR domain; the sequence is KLFDAFVSYS…LFWQKLRFAL (136 aa). Residues 1235-1346 are disordered; the sequence is HHHHHVHQQA…PTPASRNLHM (112 aa). The span at 1267–1300 shows a compositional bias: low complexity; sequence PGSFRRQPSLHQQQQQQQQIRGNNNTTQQQQQQQ.

Belongs to the Toll-like receptor family. May interact (via the extracellular domain) with 18w (via the extracellular domain).

It is found in the cell membrane. It localises to the apical cell membrane. Functionally, toll-related receptor. Probably specific to larval innate immunity. Involved in the tracheal immune response of larvae to Gram-negative and perhaps Gram-positive bacteria; upon infection it negatively regulates the immune deficiency (Imd) signaling cascade specifically in the respiratory epithelium to prevent the overexpression of antimicrobial peptides (AMP). Involved in the NF-kappa-B-dependent apoptosis of unfit cells during cell competition. Involved in neuron-specific glycosylation. Positively controls the neuromuscular junction (NMJ) growth in presynaptic motorneurons, probably via the JNK pathway. During development of the peripheral nervous system, may function in the NF-kappa-B (rel) regulatory cascade to repress expression of the neuron-specific genes sc and ase in non-neuronal cells. Promotes heterophilic cell adhesion with 18w in vitro. May have a minor role in leg development. May be involved in determining the proximal cell fate in the wing, possibly by negatively regulating the Dpp signaling pathway. May also be involved in the Dpp signaling pathway in the eye. Possibly functions with 18w and Toll-6 during convergent extension, to help direct proper planar cell polarity, cell intercalation and axis elongation. In Drosophila melanogaster (Fruit fly), this protein is Toll-like receptor Tollo.